The chain runs to 205 residues: MSRGLQLLLLSCAYSLAPATPEVKVACSEDVDLPCTAPWDPQVPYTVSWVKLLEGGEERMETPQEDHLRGQHYHQKGQNGSFDAPNERPYSLKIRNTTSCNSGTYRCTLQDPDGQRNLSGKVILRVTGCPAQRKEETFKKYRAEIVLLLALVIFYLTLIIFTCKFARLQSIFPDFSKAGMERAFLPVTSPNKHLGLVTPHKTELV.

An N-terminal signal peptide occupies residues 1–19 (MSRGLQLLLLSCAYSLAPA). The 95-residue stretch at 20-114 (TPEVKVACSE…YRCTLQDPDG (95 aa)) folds into the Ig-like V-type domain. Residues 20-144 (TPEVKVACSE…EETFKKYRAE (125 aa)) lie on the Extracellular side of the membrane. A disulfide bond links Cys35 and Cys107. The span at 60–69 (METPQEDHLR) shows a compositional bias: basic and acidic residues. Residues 60 to 81 (METPQEDHLRGQHYHQKGQNGS) are disordered. N-linked (GlcNAc...) asparagine glycosylation is found at Asn79, Asn96, and Asn117. Residues 145–166 (IVLLLALVIFYLTLIIFTCKFA) form a helical membrane-spanning segment. Residues 167–205 (RLQSIFPDFSKAGMERAFLPVTSPNKHLGLVTPHKTELV) are Cytoplasmic-facing.

As to quaternary structure, monomer. Homodimer. Homotrimer. Interacts with MARCHF1; this interaction antagonizes MARCHF1-mediated MHC II and CD86 down-regulation. In terms of processing, glycosylated when expressed on activated dendritic cells. Expressed by activated lymphocytes, Langerhans cells and activatd dendritic cells.

The protein resides in the membrane. Its function is as follows. Transmembrane glycoprotein predominantly found on the surface of many immune cells including dendritic cells or lymphocytes that plays various roles in immune response regulation. Plays an essential role in CD4(+) T-selection, differentiation and stability by regulating the activity of the major E3 ubiquitin ligase responsible for controlling MHCII trafficking MARCHF8. Also inhibits MARCHF1 association with MHCII or CD86 to prevent their ubiquitination and subsequent degradation. In addition, acts as an important modulator of protective responses against acute infections. The polypeptide is CD83 antigen (CD83) (Homo sapiens (Human)).